Reading from the N-terminus, the 653-residue chain is Protein fem-1 homolog A (653 aa).

ANK repeat units lie at residues 2-31 (DLHT…REEL), 40-70 (SGGT…SVEA), 82-111 (EGAP…SVNR), 115-145 (TNST…DLEV), 149-178 (HGHT…QVNR), 182-211 (KGNT…RMER), and 214-243 (YGMT…AGDE). Serine 108 carries the phosphoserine modification. Positions 242–274 (DEQAQPGLARVQPQGARSSPEEPPSGESYESCC) are disordered. TPR repeat units follow at residues 282 to 316 (VEAL…RHQG) and 374 to 407 (SYYI…QQNN). ANK repeat units lie at residues 518–560 (NGFT…DPDS) and 564–593 (DNNT…HMDA).

This sequence belongs to the fem-1 family. In terms of assembly, component of a CRL2 E3 ubiquitin-protein ligase complex, also named ECS (Elongin BC-CUL2/5-SOCS-box protein) complex, composed of CUL2, Elongin BC (ELOB and ELOC), RBX1 and substrate-specific adapter FEM1A. Interacts with PTGER4. Interacts with NFKB1; the interaction is direct. In terms of processing, phosphorylated; highly phosphorylated in myoblasts and myotubes. Phosphorylation at Ser-108 promotes PGE2-EP4-mediated inhibition of inflammation. Dephosphorylated by protein phosphatase 2A (PP2A).

It is found in the mitochondrion. It localises to the cytoplasm. The protein operates within protein modification; protein ubiquitination. Functionally, substrate-recognition component of a Cul2-RING (CRL2) E3 ubiquitin-protein ligase complex of the DesCEND (destruction via C-end degrons) pathway, which recognizes a C-degron located at the extreme C terminus of target proteins, leading to their ubiquitination and degradation. The C-degron recognized by the DesCEND pathway is usually a motif of less than ten residues and can be present in full-length proteins, truncated proteins or proteolytically cleaved forms. The CRL2(FEM1A) complex specifically recognizes proteins with an arginine at the C-terminus: recognizes and binds proteins ending with -Lys/Arg-Xaa-Arg and -Lys/Arg-Xaa-Xaa-Arg C-degrons, such as SIL1 or OR51B2, leading to their ubiquitination and degradation. Involved in PGE2-EP4-mediated inhibition of inflammation of macrophages via interaction with NFKB1 and PTGER4. Promotes inflammation in brain microglia through MAP2K4/MKK4-mediated signaling. The polypeptide is Protein fem-1 homolog A (Bos taurus (Bovine)).